Reading from the N-terminus, the 405-residue chain is S-adenosylmethionine synthase (405 aa).

Gly-139 to Asp-144 contributes to the ATP binding site.

It belongs to the AdoMet synthase 2 family. Mg(2+) serves as cofactor.

It carries out the reaction L-methionine + ATP + H2O = S-adenosyl-L-methionine + phosphate + diphosphate. The protein operates within amino-acid biosynthesis; S-adenosyl-L-methionine biosynthesis; S-adenosyl-L-methionine from L-methionine: step 1/1. Its function is as follows. Catalyzes the formation of S-adenosylmethionine from methionine and ATP. This is S-adenosylmethionine synthase from Thermococcus gammatolerans (strain DSM 15229 / JCM 11827 / EJ3).